A 180-amino-acid chain; its full sequence is Adenine phosphoribosyltransferase (180 aa).

This sequence belongs to the purine/pyrimidine phosphoribosyltransferase family. As to quaternary structure, homodimer.

The protein resides in the cytoplasm. It catalyses the reaction AMP + diphosphate = 5-phospho-alpha-D-ribose 1-diphosphate + adenine. It participates in purine metabolism; AMP biosynthesis via salvage pathway; AMP from adenine: step 1/1. Its function is as follows. Catalyzes a salvage reaction resulting in the formation of AMP, that is energically less costly than de novo synthesis. This chain is Adenine phosphoribosyltransferase, found in Rhizobium meliloti (strain 1021) (Ensifer meliloti).